The following is a 248-amino-acid chain: Probable transcriptional regulatory protein P9303_05381 (248 aa).

Belongs to the TACO1 family.

It localises to the cytoplasm. The chain is Probable transcriptional regulatory protein P9303_05381 from Prochlorococcus marinus (strain MIT 9303).